Here is a 619-residue protein sequence, read N- to C-terminus: MSRHFSSRSGFRSGGGFSSGSAGLVSFQRRTTSSSVRHSGGGGGRFSGGRCGGGGGGGAGGGGFGSRSLVNLGGSKSISISVAGGGGGRGGFGGGYGGGGFGGGGFGGGSGGFGLGGGFGGGGFGGGGFGGGGFGGGGFGGGSFGPVCPPGGIQEVTINQSLLQPLNVEIDPEIQKVKTREREQIKSLNNQFASFIDKVRFLEQQNQVLQTKWELLQQVDTSTRTHSLEPYFENYISNLRRRVDQLKSDQSRMDSELKNMQDLVEDYRNKYEDEINKRTNAENEFVTIKKDVDAAFMNKVDLQAKVDNLQQEIDFLTTLYQAELSQMQTQISETNVILSMDNNRSLDLDSIISEVKAQYEEIAQKSKAEAEALYQTKYEELQITAGKHGDNLKSTKMEISELNRVAQRLRSEIDSVKKQISALQQSISDAEQRGENALKDAQSKLAELEDALQKAKEDMARLLRDYQELMNTKLALDMEIATYRTLLEGEESRMSGECAPNVSVSVNTSHTTISGGGGRGGGGFGSVGGGGGYGGGSYGSGGGSYGSGGGGGGSYGSGGGGGGGYGSSSSSGGHRGGSGGGSRSGGSSGGRGSSSGGIKTSSGSSSVKFVSTSYSRAVR.

The head stretch occupies residues 1–180; the sequence is MSRHFSSRSG…DPEIQKVKTR (180 aa). R12 is subject to Omega-N-methylarginine. A phosphoserine mark is found at S18 and S21. The interval 28-49 is disordered; it reads QRRTTSSSVRHSGGGGGRFSGG. Over residues 39-49 the composition is skewed to gly residues; that stretch reads SGGGGGRFSGG. R45 is modified (omega-N-methylarginine). S68 bears the Phosphoserine mark. A coiled-coil region spans residues 173-477; sequence EIQKVKTRER…ELMNTKLALD (305 aa). The interval 181 to 216 is coil 1A; that stretch reads EREQIKSLNNQFASFIDKVRFLEQQNQVLQTKWELL. Residues 181–494 form the IF rod domain; sequence EREQIKSLNN…TLLEGEESRM (314 aa). The segment at 217–235 is linker 1; sequence QQVDTSTRTHSLEPYFENY. The segment at 236–327 is coil 1B; the sequence is ISNLRRRVDQ…TLYQAELSQM (92 aa). K277 carries the post-translational modification N6,N6-dimethyllysine. The segment at 328 to 351 is linker 12; sequence QTQISETNVILSMDNNRSLDLDSI. A Phosphoserine modification is found at S345. The interval 352–490 is coil 2; that stretch reads ISEVKAQYEE…ATYRTLLEGE (139 aa). The interval 491-619 is tail; it reads ESRMSGECAP…VSTSYSRAVR (129 aa). Omega-N-methylarginine occurs at positions 519 and 575. Residues 559–619 are disordered; sequence GGGGGGYGSS…VSTSYSRAVR (61 aa). The segment covering 573–595 has biased composition (gly residues); sequence GHRGGSGGGSRSGGSSGGRGSSS. Positions 596–606 are enriched in low complexity; that stretch reads GGIKTSSGSSS. The span at 607–619 shows a compositional bias: polar residues; that stretch reads VKFVSTSYSRAVR.

It belongs to the intermediate filament family. As to quaternary structure, heterotetramer of two type I and two type II keratins. Heterodimer with KRT10. Two heterodimers of KRT1 and KRT10 form a heterotetramer. Forms a heterodimer with KRT14; the interaction is more abundant in the absence of KRT5. Interacts with ITGB1 in the presence of RACK1 and SRC, and with RACK1. Interacts with C1QBP; the association represents a cell surface kininogen receptor. Interacts with EPPK1; interaction is dependent of higher-order structure of intermediate filament. Post-translationally, undergoes deimination of some arginine residues (citrullination).

Its subcellular location is the cell membrane. It localises to the cytoplasm. Its function is as follows. May regulate the activity of kinases such as PKC and SRC via binding to integrin beta-1 (ITB1) and the receptor of activated protein C kinase 1 (RACK1). In complex with C1QBP is a high affinity receptor for kininogen-1/HMWK. This is Keratin, type II cytoskeletal 1 from Canis lupus familiaris (Dog).